Here is a 294-residue protein sequence, read N- to C-terminus: Pyridoxal 5'-phosphate synthase subunit PdxS (294 aa).

D-ribose 5-phosphate is bound at residue D24. K81 (schiff-base intermediate with D-ribose 5-phosphate) is an active-site residue. G153 contacts D-ribose 5-phosphate. R165 lines the D-glyceraldehyde 3-phosphate pocket. Residues G214 and 235–236 (GS) contribute to the D-ribose 5-phosphate site.

This sequence belongs to the PdxS/SNZ family. In terms of assembly, in the presence of PdxT, forms a dodecamer of heterodimers.

The catalysed reaction is aldehydo-D-ribose 5-phosphate + D-glyceraldehyde 3-phosphate + L-glutamine = pyridoxal 5'-phosphate + L-glutamate + phosphate + 3 H2O + H(+). Its pathway is cofactor biosynthesis; pyridoxal 5'-phosphate biosynthesis. In terms of biological role, catalyzes the formation of pyridoxal 5'-phosphate from ribose 5-phosphate (RBP), glyceraldehyde 3-phosphate (G3P) and ammonia. The ammonia is provided by the PdxT subunit. Can also use ribulose 5-phosphate and dihydroxyacetone phosphate as substrates, resulting from enzyme-catalyzed isomerization of RBP and G3P, respectively. The sequence is that of Pyridoxal 5'-phosphate synthase subunit PdxS from Bacillus velezensis (strain DSM 23117 / BGSC 10A6 / LMG 26770 / FZB42) (Bacillus amyloliquefaciens subsp. plantarum).